Consider the following 288-residue polypeptide: Bifunctional protein FolD 2 (288 aa).

NADP(+) contacts are provided by residues 166-168 (GRS) and Ser191.

Belongs to the tetrahydrofolate dehydrogenase/cyclohydrolase family. Homodimer.

The catalysed reaction is (6R)-5,10-methylene-5,6,7,8-tetrahydrofolate + NADP(+) = (6R)-5,10-methenyltetrahydrofolate + NADPH. The enzyme catalyses (6R)-5,10-methenyltetrahydrofolate + H2O = (6R)-10-formyltetrahydrofolate + H(+). The protein operates within one-carbon metabolism; tetrahydrofolate interconversion. In terms of biological role, catalyzes the oxidation of 5,10-methylenetetrahydrofolate to 5,10-methenyltetrahydrofolate and then the hydrolysis of 5,10-methenyltetrahydrofolate to 10-formyltetrahydrofolate. The chain is Bifunctional protein FolD 2 from Myxococcus xanthus (strain DK1622).